A 508-amino-acid chain; its full sequence is Glycerol kinase (508 aa).

An ADP-binding site is contributed by Thr-14. ATP contacts are provided by Thr-14, Thr-15, and Ser-16. Thr-14 is a sn-glycerol 3-phosphate binding site. Arg-18 serves as a coordination point for ADP. Residues Arg-84, Glu-85, and Tyr-136 each coordinate sn-glycerol 3-phosphate. Residues Arg-84, Glu-85, and Tyr-136 each coordinate glycerol. His-232 bears the Phosphohistidine; by HPr mark. Sn-glycerol 3-phosphate is bound at residue Asp-246. Residues Asp-246 and Gln-247 each coordinate glycerol. The ADP site is built by Thr-268 and Gly-311. Thr-268, Gly-311, Gln-315, and Gly-412 together coordinate ATP. ADP-binding residues include Gly-412 and Asn-416.

Belongs to the FGGY kinase family. Homotetramer and homodimer (in equilibrium). Post-translationally, the phosphoenolpyruvate-dependent sugar phosphotransferase system (PTS), including enzyme I, and histidine-containing protein (HPr) are required for the phosphorylation, which leads to the activation of the enzyme.

The catalysed reaction is glycerol + ATP = sn-glycerol 3-phosphate + ADP + H(+). The protein operates within polyol metabolism; glycerol degradation via glycerol kinase pathway; sn-glycerol 3-phosphate from glycerol: step 1/1. With respect to regulation, activated by phosphorylation and inhibited by fructose 1,6-bisphosphate (FBP). In terms of biological role, key enzyme in the regulation of glycerol uptake and metabolism. Catalyzes the phosphorylation of glycerol to yield sn-glycerol 3-phosphate. The sequence is that of Glycerol kinase from Streptococcus pyogenes serotype M3 (strain ATCC BAA-595 / MGAS315).